The sequence spans 399 residues: Cyclic dehypoxanthine futalosine synthase (399 aa).

The 233-residue stretch at 56-288 (ATYIIERNIN…IAIARVFLDN (233 aa)) folds into the Radical SAM core domain. [4Fe-4S] cluster contacts are provided by Cys70, Cys74, and Cys77.

It belongs to the radical SAM superfamily. MqnC family. [4Fe-4S] cluster serves as cofactor.

It catalyses the reaction dehypoxanthine futalosine + S-adenosyl-L-methionine = cyclic dehypoxanthinylfutalosinate + 5'-deoxyadenosine + L-methionine + H(+). It functions in the pathway quinol/quinone metabolism; menaquinone biosynthesis. Its function is as follows. Radical SAM enzyme that catalyzes the cyclization of dehypoxanthine futalosine (DHFL) into cyclic dehypoxanthine futalosine (CDHFL), a step in the biosynthesis of menaquinone (MK, vitamin K2). In Streptomyces coelicolor (strain ATCC BAA-471 / A3(2) / M145), this protein is Cyclic dehypoxanthine futalosine synthase.